The sequence spans 910 residues: Putative coatomer subunit beta'-3 (910 aa).

WD repeat units follow at residues 13-52 (QRSERAKSVDLHPTEPWILSSLYSGSVCIWNYQTQTMVKS), 55-94 (VTELPVRSSKFITRKQWVVAGADDMFIRVYNYNTMDKVKV), 97-136 (AHTDYIRCVAVHPTQPFVLSSSDDMLIKLWDWDKGWMCTQ), 140-180 (GHSH…PNFT), 183-224 (GHSK…CVQT), 227-266 (GHAHNVSAVCFHPELPIILTGSEDGTVRLWHSTTYRLENT), 269-309 (YGLE…ASMD), 351-393 (TCDL…GSAL), and 461-501 (RIDV…SHLD). Positions 865 to 884 (ENGVEESQEDAVEVDVEADG) are enriched in acidic residues. The disordered stretch occupies residues 865–910 (ENGVEESQEDAVEVDVEADGSTDGTVLVNGNDTEEQWGTNNEESLA). The span at 886-910 (TDGTVLVNGNDTEEQWGTNNEESLA) shows a compositional bias: polar residues.

The protein belongs to the WD repeat COPB2 family. As to quaternary structure, oligomeric complex that consists of at least the alpha, beta, beta', gamma, delta, epsilon and zeta subunits.

The protein localises to the cytoplasm. The protein resides in the golgi apparatus membrane. It is found in the cytoplasmic vesicle. It localises to the COPI-coated vesicle membrane. Functionally, the coatomer is a cytosolic protein complex that binds to dilysine motifs and reversibly associates with Golgi non-clathrin-coated vesicles, which further mediate biosynthetic protein transport from the ER, via the Golgi up to the trans Golgi network. Coatomer complex is required for budding from Golgi membranes, and is essential for the retrograde Golgi-to-ER transport of dilysine-tagged proteins. This Oryza sativa subsp. japonica (Rice) protein is Putative coatomer subunit beta'-3.